We begin with the raw amino-acid sequence, 328 residues long: Coiled-coil domain-containing protein 54 (328 aa).

Residues 122–151 (TTKDILSMKEDIKALKKKVTELEKQNSYSR) are a coiled coil. Thr-182 is subject to Phosphothreonine. Basic and acidic residues predominate over residues 186–197 (TDREMSSAEPEK). The tract at residues 186-205 (TDREMSSAEPEKVPSYPKST) is disordered.

This is Coiled-coil domain-containing protein 54 (CCDC54) from Macaca fascicularis (Crab-eating macaque).